A 141-amino-acid polypeptide reads, in one-letter code: uncharacterized protein (141 aa).

The next 4 membrane-spanning stretches (helical) occupy residues 7-24 (YRIPFGIGYLLGTFFLSP), 39-56 (FLKFLWFPFWVFSRHRGI), 69-91 (FYLIFIFFFLYFAVLGVLSILGF), and 116-138 (FFILGLIVADLLHIVLDIVSSFI).

It localises to the cell membrane. This is an uncharacterized protein from Aquifex aeolicus (strain VF5).